We begin with the raw amino-acid sequence, 234 residues long: MLTYETWEENDVSFSEEDETKGALSALSWAYKEYKSEIVYACSFGVEGMVLLHLINQVNPSAKVVFLDTNVHFQETYELIQKVRERFPSLNIIEKQPKLTLDEQANLHGNKLWESNPNLCCNIRKILPLEESLANEKAWISGLRREQSETRKHTKFINQDHRFQSIKVCPLIHWTWKEVWRYVYKHSLPYNPLHDIGYPSIGCEKCTLPVGEGGDSRDGRWAGKVKTECGLHYQ.

Cys120, Cys121, Cys203, and Cys206 together coordinate [4Fe-4S] cluster. The active-site Nucleophile; cysteine thiosulfonate intermediate is the Cys229.

Belongs to the PAPS reductase family. CysH subfamily. It depends on [4Fe-4S] cluster as a cofactor.

It is found in the cytoplasm. It carries out the reaction [thioredoxin]-disulfide + sulfite + AMP + 2 H(+) = adenosine 5'-phosphosulfate + [thioredoxin]-dithiol. It participates in sulfur metabolism; hydrogen sulfide biosynthesis; sulfite from sulfate. In terms of biological role, catalyzes the formation of sulfite from adenosine 5'-phosphosulfate (APS) using thioredoxin as an electron donor. This is Adenosine 5'-phosphosulfate reductase from Bacillus cereus (strain Q1).